The following is a 694-amino-acid chain: uncharacterized protein (694 aa).

The 152-residue stretch at 17–168 (DAFLYVRQSS…GGILNKARRG (152 aa)) folds into the Resolvase/invertase-type recombinase catalytic domain. The O-(5'-phospho-DNA)-serine intermediate role is filled by serine 25. Positions 175 to 316 (PIGLVYTPDA…QAALEQNATG (142 aa)) form a DNA-binding region, recombinase. The chain crosses the membrane as a helical span at residues 386-406 (AVSALLLEVMAPAAIDVALAV).

The protein resides in the membrane. This is an uncharacterized protein from Sinorhizobium fredii (strain NBRC 101917 / NGR234).